The following is a 311-amino-acid chain: MKVAVIGAAGGIGQALALLLKNRLPAGSDLALYDIAPVTPGVAADLSHIPTPVSIKGYCGEDPTPALEGADVVLISAGVARKPGMDRSDLFNINAGIVKSLTEKIAVTCPKACIGIITNPVNTTVAIAAEVLKKAGVYDKNKLFGVTTLDVIRSETFVAELKDKDPGEIRVPVIGGHSGVTILPLLSQVEGVEFTAEEVAALTPRIQNAGTEVVEAKAGGGSATLSMGQAACRFGLSLVKALSGEQGVVECAYVEGNGEHARFFAQPILLGKNGVEEIQSYGELSAFEQEALESMLDTLRGDIKIGEEFVQ.

NAD(+) contacts are provided by residues 7 to 13 and Asp-34; that span reads GAAGGIG. Residues Arg-81 and Arg-87 each contribute to the substrate site. NAD(+) is bound by residues Asn-94 and 117-119; that span reads ITN. Asn-119 and Arg-153 together coordinate substrate. The Proton acceptor role is filled by His-177. Residue Met-227 coordinates NAD(+).

Belongs to the LDH/MDH superfamily. MDH type 1 family. As to quaternary structure, homodimer.

It catalyses the reaction (S)-malate + NAD(+) = oxaloacetate + NADH + H(+). Its function is as follows. Catalyzes the reversible oxidation of malate to oxaloacetate. The protein is Malate dehydrogenase of Aliivibrio fischeri (strain MJ11) (Vibrio fischeri).